The chain runs to 477 residues: Homospermidine synthase (477 aa).

This sequence belongs to the saccharopine dehydrogenase family. As to quaternary structure, homodimer. NAD(+) serves as cofactor.

It carries out the reaction 2 putrescine = sym-homospermidine + NH4(+). It catalyses the reaction putrescine + spermidine = sym-homospermidine + propane-1,3-diamine. In terms of biological role, involved in the NAD(+)-dependent synthesis of the polyamine homospermidine from putrescine. This Blastochloris viridis (Rhodopseudomonas viridis) protein is Homospermidine synthase (hss).